The primary structure comprises 431 residues: 3-deoxy-D-manno-octulosonic acid transferase (431 aa).

Residues 5-27 (WLTSRLYDAFLVCAFFVSAPRIF) traverse the membrane as a helical; Signal-anchor segment. Glutamate 67 acts as the Proton acceptor in catalysis. Residues 275–276 (PR), 315–317 (MGV), and 342–345 (NLLE) contribute to the CMP site.

It belongs to the glycosyltransferase group 1 family. Glycosyltransferase 30 subfamily.

The protein resides in the cell inner membrane. It catalyses the reaction lipid IVA (E. coli) + CMP-3-deoxy-beta-D-manno-octulosonate = alpha-Kdo-(2-&gt;6)-lipid IVA (E. coli) + CMP + H(+). The enzyme catalyses alpha-Kdo-(2-&gt;6)-lipid IVA (E. coli) + CMP-3-deoxy-beta-D-manno-octulosonate = alpha-Kdo-(2-&gt;4)-alpha-Kdo-(2-&gt;6)-lipid IVA (E. coli) + CMP + H(+). It carries out the reaction alpha-Kdo-(2-&gt;4)-alpha-Kdo-(2-&gt;6)-lipid IVA (E. coli) + CMP-3-deoxy-beta-D-manno-octulosonate = alpha-Kdo-(2-&gt;8)-alpha-Kdo-(2-&gt;4)-alpha-Kdo-(2-&gt;6)-lipid IVA (E. coli) + CMP + H(+). It participates in bacterial outer membrane biogenesis; LPS core biosynthesis. Functionally, involved in lipopolysaccharide (LPS) biosynthesis. Catalyzes the transfer of three 3-deoxy-D-manno-octulosonate (Kdo) residues from CMP-Kdo to lipid IV(A), the tetraacyldisaccharide-1,4'-bisphosphate precursor of lipid A. Thus generates the genus-specific LPS epitope of Chlamydia, composed of the trisaccharide alpha-Kdo-(2-&gt;8)-alpha-Kdo-(2-&gt;4)-alpha-Kdo. The polypeptide is 3-deoxy-D-manno-octulosonic acid transferase (waaA) (Chlamydia trachomatis serovar D (strain ATCC VR-885 / DSM 19411 / UW-3/Cx)).